We begin with the raw amino-acid sequence, 121 residues long: Large ribosomal subunit protein mL52 (121 aa).

The N-terminal 22 residues, 1–22 (MAALGTWLSSVRRLHCSVVARA), are a transit peptide targeting the mitochondrion. A compositionally biased stretch (basic and acidic residues) spans 98-109 (QEERKKEHDLKP). A disordered region spans residues 98–121 (QEERKKEHDLKPKGTLLRSPLPNQ).

Belongs to the mitochondrion-specific ribosomal protein mL52 family. Component of the mitochondrial ribosome large subunit (39S) which comprises a 16S rRNA and about 50 distinct proteins.

Its subcellular location is the mitochondrion. The polypeptide is Large ribosomal subunit protein mL52 (Mrpl52) (Mus musculus (Mouse)).